Here is a 217-residue protein sequence, read N- to C-terminus: Probable chemoreceptor glutamine deamidase CheD (217 aa).

The tract at residues 194–217 (ATSGTAPSRGGELFTRASASRTPS) is disordered.

The protein belongs to the CheD family.

It carries out the reaction L-glutaminyl-[protein] + H2O = L-glutamyl-[protein] + NH4(+). In terms of biological role, probably deamidates glutamine residues to glutamate on methyl-accepting chemotaxis receptors (MCPs), playing an important role in chemotaxis. The protein is Probable chemoreceptor glutamine deamidase CheD of Cupriavidus pinatubonensis (strain JMP 134 / LMG 1197) (Cupriavidus necator (strain JMP 134)).